A 115-amino-acid polypeptide reads, in one-letter code: MNQIIRELEKAQLKQDIPAFRPGDTVRVHVKVIEGQRERIQLFEGVCIRRRGTGISETFTARKISYGVGVERTFPVHTPKIDKIEIVRHGKVRRAKLYYLRDRVGKAARIKEIRR.

It belongs to the bacterial ribosomal protein bL19 family.

This protein is located at the 30S-50S ribosomal subunit interface and may play a role in the structure and function of the aminoacyl-tRNA binding site. In Brevibacillus brevis (strain 47 / JCM 6285 / NBRC 100599), this protein is Large ribosomal subunit protein bL19.